Reading from the N-terminus, the 355-residue chain is S-adenosylmethionine:tRNA ribosyltransferase-isomerase (355 aa).

It belongs to the QueA family. Monomer.

It localises to the cytoplasm. The catalysed reaction is 7-aminomethyl-7-carbaguanosine(34) in tRNA + S-adenosyl-L-methionine = epoxyqueuosine(34) in tRNA + adenine + L-methionine + 2 H(+). The protein operates within tRNA modification; tRNA-queuosine biosynthesis. Functionally, transfers and isomerizes the ribose moiety from AdoMet to the 7-aminomethyl group of 7-deazaguanine (preQ1-tRNA) to give epoxyqueuosine (oQ-tRNA). The sequence is that of S-adenosylmethionine:tRNA ribosyltransferase-isomerase from Jannaschia sp. (strain CCS1).